Here is a 311-residue protein sequence, read N- to C-terminus: tRNA(Ile)-lysidine synthase (311 aa).

31–36 (SGGKDS) contributes to the ATP binding site.

Belongs to the tRNA(Ile)-lysidine synthase family.

It is found in the cytoplasm. The enzyme catalyses cytidine(34) in tRNA(Ile2) + L-lysine + ATP = lysidine(34) in tRNA(Ile2) + AMP + diphosphate + H(+). Ligates lysine onto the cytidine present at position 34 of the AUA codon-specific tRNA(Ile) that contains the anticodon CAU, in an ATP-dependent manner. Cytidine is converted to lysidine, thus changing the amino acid specificity of the tRNA from methionine to isoleucine. The chain is tRNA(Ile)-lysidine synthase from Petrotoga mobilis (strain DSM 10674 / SJ95).